The chain runs to 84 residues: Conophysin-R (84 aa).

Cystine bridges form between Cys6/Cys46, Cys9/Cys20, Cys14/Cys36, Cys21/Cys26, Cys53/Cys71, Cys65/Cys83, and Cys72/Cys77.

Expressed by the venom duct.

The protein localises to the secreted. Its function is as follows. Targets vasopressin-oxytocin related receptors. No effect observed when injected into goldfish or into mice. This Conus radiatus (Rayed cone) protein is Conophysin-R.